Here is a 445-residue protein sequence, read N- to C-terminus: Probable glycine dehydrogenase (decarboxylating) subunit 1 (445 aa).

This sequence belongs to the GcvP family. N-terminal subunit subfamily. The glycine cleavage system is composed of four proteins: P, T, L and H. In this organism, the P 'protein' is a heterodimer of two subunits.

It carries out the reaction N(6)-[(R)-lipoyl]-L-lysyl-[glycine-cleavage complex H protein] + glycine + H(+) = N(6)-[(R)-S(8)-aminomethyldihydrolipoyl]-L-lysyl-[glycine-cleavage complex H protein] + CO2. Its function is as follows. The glycine cleavage system catalyzes the degradation of glycine. The P protein binds the alpha-amino group of glycine through its pyridoxal phosphate cofactor; CO(2) is released and the remaining methylamine moiety is then transferred to the lipoamide cofactor of the H protein. This Citrifermentans bemidjiense (strain ATCC BAA-1014 / DSM 16622 / JCM 12645 / Bem) (Geobacter bemidjiensis) protein is Probable glycine dehydrogenase (decarboxylating) subunit 1.